Here is a 296-residue protein sequence, read N- to C-terminus: Phosphatidylglycerol--prolipoprotein diacylglyceryl transferase (296 aa).

The next 4 membrane-spanning stretches (helical) occupy residues 10 to 30 (IAFS…LAAF), 57 to 77 (LLFY…MLFY), 92 to 112 (VWEG…ACWL), and 119 to 139 (LHFF…LGFG). R140 is a binding site for a 1,2-diacyl-sn-glycero-3-phospho-(1'-sn-glycerol). 3 helical membrane passes run 194–214 (QLYE…TFSM), 220–240 (YAVS…VEFV), and 254–274 (WLTM…VLLA).

The protein belongs to the Lgt family.

It localises to the cell inner membrane. It carries out the reaction L-cysteinyl-[prolipoprotein] + a 1,2-diacyl-sn-glycero-3-phospho-(1'-sn-glycerol) = an S-1,2-diacyl-sn-glyceryl-L-cysteinyl-[prolipoprotein] + sn-glycerol 1-phosphate + H(+). Its pathway is protein modification; lipoprotein biosynthesis (diacylglyceryl transfer). Functionally, catalyzes the transfer of the diacylglyceryl group from phosphatidylglycerol to the sulfhydryl group of the N-terminal cysteine of a prolipoprotein, the first step in the formation of mature lipoproteins. The chain is Phosphatidylglycerol--prolipoprotein diacylglyceryl transferase from Xanthomonas axonopodis pv. citri (strain 306).